We begin with the raw amino-acid sequence, 210 residues long: Large ribosomal subunit protein uL3 (210 aa).

Positions 126-167 (WGFQRGPSGHGSKNIREPGSTGNATFPGRVIKGKKMPGQKGN) are disordered. Basic residues predominate over residues 156-167 (IKGKKMPGQKGN).

Belongs to the universal ribosomal protein uL3 family. In terms of assembly, part of the 50S ribosomal subunit. Forms a cluster with proteins L14 and L19.

One of the primary rRNA binding proteins, it binds directly near the 3'-end of the 23S rRNA, where it nucleates assembly of the 50S subunit. This chain is Large ribosomal subunit protein uL3, found in Syntrophobacter fumaroxidans (strain DSM 10017 / MPOB).